A 410-amino-acid polypeptide reads, in one-letter code: Elongation factor Tu, apicoplast (410 aa).

Positions lysine 10–threonine 214 constitute a tr-type G domain. A G1 region spans residues glycine 19–threonine 26. GTP is bound at residue glycine 19 to threonine 26. Residue threonine 26 coordinates Mg(2+). Positions glycine 60–asparagine 64 are G2. The interval aspartate 81–glycine 84 is G3. GTP contacts are provided by residues aspartate 81–histidine 85 and asparagine 136–aspartate 139. Residues asparagine 136 to aspartate 139 form a G4 region. Positions serine 174–leucine 176 are G5.

This sequence belongs to the TRAFAC class translation factor GTPase superfamily. Classic translation factor GTPase family. EF-Tu/EF-1A subfamily.

It localises to the plastid. It is found in the apicoplast. It catalyses the reaction GTP + H2O = GDP + phosphate + H(+). In terms of biological role, GTP hydrolase that promotes the GTP-dependent binding of aminoacyl-tRNA to the A-site of ribosomes during protein biosynthesis. This chain is Elongation factor Tu, apicoplast (tufA), found in Plasmodium falciparum (isolate 3D7).